Consider the following 940-residue polypeptide: Valine--tRNA ligase (940 aa).

The 'HIGH' region signature appears at 47-57 (PNVTGILHMGH). Residues 564–568 (KLSKS) carry the 'KMSKS' region motif. ATP is bound at residue Lys567. Residues 872–938 (PIEQITKEKN…LQSILDKLAS (67 aa)) adopt a coiled-coil conformation.

It belongs to the class-I aminoacyl-tRNA synthetase family. ValS type 1 subfamily. In terms of assembly, monomer.

The protein resides in the cytoplasm. It catalyses the reaction tRNA(Val) + L-valine + ATP = L-valyl-tRNA(Val) + AMP + diphosphate. Its function is as follows. Catalyzes the attachment of valine to tRNA(Val). As ValRS can inadvertently accommodate and process structurally similar amino acids such as threonine, to avoid such errors, it has a 'posttransfer' editing activity that hydrolyzes mischarged Thr-tRNA(Val) in a tRNA-dependent manner. This is Valine--tRNA ligase from Chlamydia felis (strain Fe/C-56) (Chlamydophila felis).